Consider the following 188-residue polypeptide: MLKLRQLQKKKQKENENSSSIQPNLSAARIRLKRDLDSLDLPPTVTLNVITSPDSADRSQSPKLEVIVRPDEGYYNYGSINFNLDFNEVYPIEPPKVVCLKKIFHPNIDLKGNVCLNILREDWSPALDLQSIITGLLFLFLEPNPNDPLNKDAAKLLCEGEKEFAEAVRLTMSGGSIEHVKYDNIVSP.

An N-acetylmethionine modification is found at Met1. Basic residues predominate over residues 1-12; sequence MLKLRQLQKKKQ. The tract at residues 1 to 23 is disordered; it reads MLKLRQLQKKKQKENENSSSIQP. The UBC core domain occupies 27–177; sequence AARIRLKRDL…VRLTMSGGSI (151 aa). Cys115 serves as the catalytic Glycyl thioester intermediate.

The protein belongs to the ubiquitin-conjugating enzyme family. UBC12 subfamily. As to quaternary structure, interacts with DCN1. Post-translationally, the acetylation of Met-1 is cotranslational, and not regulatory. The N-acetylmethionine increases affinity for DCUN1D1 by about 2 orders of magnitude and is crucial for NEDD8 transfer to cullins.

It catalyses the reaction [E1 NEDD8-activating enzyme]-S-[NEDD8 protein]-yl-L-cysteine + [E2 NEDD8-conjugating enzyme]-L-cysteine = [E1 NEDD8-activating enzyme]-L-cysteine + [E2 NEDD8-conjugating enzyme]-S-[NEDD8-protein]-yl-L-cysteine.. It participates in protein modification; protein neddylation. Functionally, accepts the ubiquitin-like protein NEDD8/RUB1 from the UBA3-ULA1 E1 complex and catalyzes its covalent attachment to other proteins. The major substrate is CDC53/Cullin. The protein is NEDD8-conjugating enzyme UBC12 (UBC12) of Saccharomyces cerevisiae (strain ATCC 204508 / S288c) (Baker's yeast).